We begin with the raw amino-acid sequence, 340 residues long: NADH-quinone oxidoreductase subunit H (340 aa).

A run of 8 helical transmembrane segments spans residues 4 to 24 (TIGILIWIIIKILVIVVPLLI), 78 to 98 (YLFVIAPLFALVPSLVGWAVI), 113 to 133 (VLYLFAMSSLGVYGVLIAGWA), 151 to 171 (VSYEIAMGFALVGVLLAAGSM), 184 to 204 (MLHWWFIPLLPLFLVFWISGI), 244 to 264 (SMILISTVLAILFMGGWLSPF), 273 to 293 (IFFIVPGFVWLLLKISFFLFV), and 316 to 336 (VLIPVTIVWLIVTALMVVAHV).

It belongs to the complex I subunit 1 family. As to quaternary structure, NDH-1 is composed of 14 different subunits. Subunits NuoA, H, J, K, L, M, N constitute the membrane sector of the complex.

Its subcellular location is the cell inner membrane. It carries out the reaction a quinone + NADH + 5 H(+)(in) = a quinol + NAD(+) + 4 H(+)(out). NDH-1 shuttles electrons from NADH, via FMN and iron-sulfur (Fe-S) centers, to quinones in the respiratory chain. The immediate electron acceptor for the enzyme in this species is believed to be ubiquinone. Couples the redox reaction to proton translocation (for every two electrons transferred, four hydrogen ions are translocated across the cytoplasmic membrane), and thus conserves the redox energy in a proton gradient. This subunit may bind ubiquinone. The polypeptide is NADH-quinone oxidoreductase subunit H (Legionella pneumophila subsp. pneumophila (strain Philadelphia 1 / ATCC 33152 / DSM 7513)).